The chain runs to 329 residues: Phenylalanine--tRNA ligase alpha subunit (329 aa).

It belongs to the class-II aminoacyl-tRNA synthetase family. Phe-tRNA synthetase alpha subunit type 1 subfamily. Tetramer of two alpha and two beta subunits. Requires Mg(2+) as cofactor.

The protein localises to the cytoplasm. The catalysed reaction is tRNA(Phe) + L-phenylalanine + ATP = L-phenylalanyl-tRNA(Phe) + AMP + diphosphate + H(+). This chain is Phenylalanine--tRNA ligase alpha subunit (pheS), found in Buchnera aphidicola subsp. Schizaphis graminum (strain Sg).